A 151-amino-acid polypeptide reads, in one-letter code: Sperm surface protein Sp17 (151 aa).

The span at 68 to 98 (FYNNHAFEEQEPPEKSDPKQEESQIPGKEEE) shows a compositional bias: basic and acidic residues. 2 disordered regions span residues 68 to 115 (FYNN…EKEE) and 130 to 151 (AREE…EENK). An IQ domain is found at 114–143 (EEVAAVKIQAAFRGHVAREEVKKMKTDSLQ).

In terms of assembly, homodimer. May interact with ROPN1. In terms of tissue distribution, testis- and sperm-specific.

The protein localises to the membrane. In terms of biological role, sperm surface zona pellucida binding protein. Helps to bind spermatozoa to the zona pellucida with high affinity. Might function in binding zona pellucida and carbohydrates. This Macaca fascicularis (Crab-eating macaque) protein is Sperm surface protein Sp17 (SPA17).